We begin with the raw amino-acid sequence, 378 residues long: GDP-mannose-dependent alpha-mannosyltransferase (378 aa).

Belongs to the glycosyltransferase group 1 family. Glycosyltransferase 4 subfamily.

It functions in the pathway phospholipid metabolism; phosphatidylinositol metabolism. Catalyzes the addition of a mannose residue from GDP-D-mannose to GlcAGroAc2 to generate 1,2-di-O-C16/C18:1-(alpha-D-mannopyranosyl)-(1-4)-(alpha-D-glucopyranosyluronic acid)-(1-3)-glycerol(ManGlcAGroAc2). This Mycobacterium tuberculosis (strain CDC 1551 / Oshkosh) protein is GDP-mannose-dependent alpha-mannosyltransferase (mgtA).